The following is a 414-amino-acid chain: FAD-dependent monooxygenase adaC (414 aa).

Residues Glu32, Ala43, Arg115, Asp325, and Gly338 each coordinate FAD.

Belongs to the paxM FAD-dependent monooxygenase family. FAD serves as cofactor.

The catalysed reaction is 3-(2,4-dioxopentyl)-3,6,8,9-tetrahydroxy-1-oxo-1,2,3,4-tetrahydroanthracene-2-carboxyl-[ACP] + NADPH + O2 + H(+) = 3-(2,4-dioxopentyl)-2,3,6,8,9-pentahydroxy-1-oxo-1,2,3,4-tetrahydroanthracene-2-carboxyl-[ACP] + NADP(+) + H2O. It functions in the pathway secondary metabolite biosynthesis. Its function is as follows. FAD-dependent monooxygenase; part of the gene cluster that mediates the biosynthesis of the linear tetracyclic TAN-1612 neuropeptide Y receptor antagonist. The decaketide backbone of TAN-1612 is synthesized by the non-reducing polyketide synthase adaA via condensation of one acetyl-CoA starter unit with 9 malonyl-CoA units. The FAD-dependent monooxygenase adaC then performs hydroxylation at C2 while the polaketide chain is still attached to the NRPKS adaA. The alpha-hydroxylation step at C2 appears to be crucial for the following C18-C1 Claisen cyclization and release of the C9-hydroxyl version of TAN-1612 from the NRPKS adaA, two steps performed by the lactamase-like protein adaB. Finally, the O-methyltransferase adaD performs the C9 O-methylation to complete the biosynthesis of TAN-1612. This Aspergillus niger protein is FAD-dependent monooxygenase adaC.